A 168-amino-acid chain; its full sequence is mRNA stability protein IGO1 (168 aa).

The segment covering 1-13 has biased composition (low complexity); it reads MSNENLSPNSSNP. The segment at 1–31 is disordered; it reads MSNENLSPNSSNPDLTKLNNGESGTIDTSKF. Residues 17-31 show a composition bias toward polar residues; it reads KLNNGESGTIDTSKF. 2 positions are modified to phosphoserine: serine 32 and serine 64. Residues 125 to 168 are disordered; the sequence is KEGSISSGPPSSNNGTIGGGSTSSTPVGNHSSSSSSLYTESPIR. Composition is skewed to low complexity over residues 127 to 139 and 146 to 168; these read GSIS…SNNG and TSST…SPIR.

This sequence belongs to the endosulfine family. Interacts with RIM15, DHH1, PBP1, PBP4 and LSM12. Phosphorylated at Ser-64 by RIM15.

Its function is as follows. Required for TORC1 to properly control gene expression and chronological life span. Plays an essential role in initiation of the G0 program by preventing the degradation of specific nutrient-regulated mRNAs via the 5'-3' mRNA decay pathway. This Saccharomyces cerevisiae (strain ATCC 204508 / S288c) (Baker's yeast) protein is mRNA stability protein IGO1 (IGO1).